A 78-amino-acid chain; its full sequence is U7-lycotoxin-Ls1e (78 aa).

The first 22 residues, 1 to 22 (MKLIIFTGLALLLIVSLIDVEA), serve as a signal peptide directing secretion. Positions 23–26 (QNEG) are excised as a propeptide.

The protein belongs to the neurotoxin 19 (CSTX) family. 07 (U7-Lctx) subfamily. Contains 4 disulfide bonds. In terms of tissue distribution, expressed by the venom gland.

Its subcellular location is the secreted. The polypeptide is U7-lycotoxin-Ls1e (Lycosa singoriensis (Wolf spider)).